A 226-amino-acid polypeptide reads, in one-letter code: Glutathione peroxidase 3 (226 aa).

The N-terminal stretch at 1–24 (MARLLQASCLLSLLLAGFLPQSRG) is a signal peptide. Sec73 is an active-site residue. Sec73 is a non-standard amino acid (selenocysteine).

This sequence belongs to the glutathione peroxidase family. In terms of assembly, homotetramer. As to expression, expressed intensively in the kidney and adrenal gland, and weakly in the cerebellum, heart, and lung. Secreted in plasma.

The protein localises to the secreted. The enzyme catalyses 2 glutathione + H2O2 = glutathione disulfide + 2 H2O. It carries out the reaction tert-butyl hydroperoxide + 2 glutathione = tert-butanol + glutathione disulfide + H2O. Functionally, protects cells and enzymes from oxidative damage, by catalyzing the reduction of hydrogen peroxide, lipid peroxides and organic hydroperoxide, by glutathione. This Macaca fuscata fuscata (Japanese macaque) protein is Glutathione peroxidase 3.